The chain runs to 274 residues: MKKTVIALLAWFVSSASLAATPWQKITHPVPGAAQSIGSFANGCIIGADTLPVQSDNYQVMRTDQRRYFGHPDLVMFIQRLSHQAQQRRLGTVLIGDMGMPAGGRFNGGHASHQTGLDVDIFLQLPKTRWSQAQLLRPQALDLVSRDGKHVVPSRWSSDIASLIKLAAQDNDVTRIFVNPAIKQQLCLDAGSDRDWLRKVRPWFQHRAHMHVRLRCPADSLECEDQPLPPPGDGCGAELQSWFEPPKPGTTKPEKKTPPPLPPSCQALLDEHVL.

The signal sequence occupies residues 1 to 19 (MKKTVIALLAWFVSSASLA). Intrachain disulfides connect cysteine 44–cysteine 265, cysteine 187–cysteine 235, and cysteine 216–cysteine 223. Positions 110, 113, 120, 147, 150, and 211 each coordinate Zn(2+). Positions 225–274 (DQPLPPPGDGCGAELQSWFEPPKPGTTKPEKKTPPPLPPSCQALLDEHVL) are disordered.

The protein belongs to the peptidase M74 family. In terms of assembly, dimer. It depends on Zn(2+) as a cofactor.

The protein resides in the periplasm. Functionally, murein endopeptidase that cleaves the D-alanyl-meso-2,6-diamino-pimelyl amide bond that connects peptidoglycan strands. Likely plays a role in the removal of murein from the sacculus. This chain is Penicillin-insensitive murein endopeptidase, found in Salmonella paratyphi C (strain RKS4594).